The chain runs to 110 residues: Large ribosomal subunit protein uL22 (110 aa).

The protein belongs to the universal ribosomal protein uL22 family. Part of the 50S ribosomal subunit.

Functionally, this protein binds specifically to 23S rRNA; its binding is stimulated by other ribosomal proteins, e.g. L4, L17, and L20. It is important during the early stages of 50S assembly. It makes multiple contacts with different domains of the 23S rRNA in the assembled 50S subunit and ribosome. Its function is as follows. The globular domain of the protein is located near the polypeptide exit tunnel on the outside of the subunit, while an extended beta-hairpin is found that lines the wall of the exit tunnel in the center of the 70S ribosome. The chain is Large ribosomal subunit protein uL22 from Desulfotalea psychrophila (strain LSv54 / DSM 12343).